The following is a 315-amino-acid chain: Acetyl-coenzyme A carboxylase carboxyl transferase subunit alpha (315 aa).

Residues 40 to 293 (LQDKSKTLTE…REELSSQLAM (254 aa)) form the CoA carboxyltransferase C-terminal domain.

Belongs to the AccA family. In terms of assembly, acetyl-CoA carboxylase is a heterohexamer composed of biotin carboxyl carrier protein (AccB), biotin carboxylase (AccC) and two subunits each of ACCase subunit alpha (AccA) and ACCase subunit beta (AccD).

Its subcellular location is the cytoplasm. The catalysed reaction is N(6)-carboxybiotinyl-L-lysyl-[protein] + acetyl-CoA = N(6)-biotinyl-L-lysyl-[protein] + malonyl-CoA. It participates in lipid metabolism; malonyl-CoA biosynthesis; malonyl-CoA from acetyl-CoA: step 1/1. In terms of biological role, component of the acetyl coenzyme A carboxylase (ACC) complex. First, biotin carboxylase catalyzes the carboxylation of biotin on its carrier protein (BCCP) and then the CO(2) group is transferred by the carboxyltransferase to acetyl-CoA to form malonyl-CoA. In Pseudomonas savastanoi pv. phaseolicola (strain 1448A / Race 6) (Pseudomonas syringae pv. phaseolicola (strain 1448A / Race 6)), this protein is Acetyl-coenzyme A carboxylase carboxyl transferase subunit alpha.